The following is a 783-amino-acid chain: Aconitate hydratase, mitochondrial (783 aa).

A mitochondrion-targeting transit peptide spans 1–25 (MITTRLARMGALAPKSRLLFGTRGM). Residues glutamine 102 and 195–197 (DSH) each bind substrate. Residues cysteine 388, cysteine 451, and cysteine 454 each coordinate [4Fe-4S] cluster. Substrate is bound by residues arginine 477 and arginine 482. The tract at residues 524-555 (EFKLKAPTGDGLPSRGYDPGRDTYQAPPTDRS) is disordered. Residues arginine 610 and 673 to 674 (SR) each bind substrate.

It belongs to the aconitase/IPM isomerase family. It depends on [4Fe-4S] cluster as a cofactor.

The protein localises to the mitochondrion. The catalysed reaction is citrate = D-threo-isocitrate. It catalyses the reaction (2R)-homocitrate = cis-homoaconitate + H2O. It participates in carbohydrate metabolism; tricarboxylic acid cycle; isocitrate from oxaloacetate: step 2/2. The protein operates within amino-acid biosynthesis; L-lysine biosynthesis via AAA pathway; L-alpha-aminoadipate from 2-oxoglutarate: step 2/5. Functionally, catalyzes the isomerization of citrate to isocitrate via cis-aconitate, a step in the citric acid cycle. Also catalyzes the reversible dehydration of (R)-homocitrate to cis-homoaconitate, a step in the alpha-aminoadipate pathway for lysine biosynthesis. This chain is Aconitate hydratase, mitochondrial (acoA), found in Emericella nidulans (strain FGSC A4 / ATCC 38163 / CBS 112.46 / NRRL 194 / M139) (Aspergillus nidulans).